A 92-amino-acid chain; its full sequence is MRVLYIIAYDITDARRLGQIRYFLKGYSTGGQKSVYECFLEREELKFIISKIKRLINPNEDRVHIFRIDGRSKVITLGIAVPPIDPEYFYIG.

Asp10 is a binding site for Mg(2+).

The protein belongs to the CRISPR-associated endoribonuclease Cas2 protein family. As to quaternary structure, homodimer, forms a heterotetramer with a Cas1 homodimer. Mg(2+) is required as a cofactor.

Its function is as follows. CRISPR (clustered regularly interspaced short palindromic repeat), is an adaptive immune system that provides protection against mobile genetic elements (viruses, transposable elements and conjugative plasmids). CRISPR clusters contain sequences complementary to antecedent mobile elements and target invading nucleic acids. CRISPR clusters are transcribed and processed into CRISPR RNA (crRNA). Functions as a ssRNA-specific endoribonuclease. Involved in the integration of spacer DNA into the CRISPR cassette. The sequence is that of CRISPR-associated endoribonuclease Cas2 1 from Thermodesulfovibrio yellowstonii (strain ATCC 51303 / DSM 11347 / YP87).